Reading from the N-terminus, the 456-residue chain is Imidazolonepropionase (456 aa).

Positions 104 and 106 each coordinate Fe(3+). Zn(2+) contacts are provided by His-104 and His-106. Positions 113, 176, and 209 each coordinate 4-imidazolone-5-propanoate. Tyr-176 is a binding site for N-formimidoyl-L-glutamate. His-274 contributes to the Fe(3+) binding site. His-274 contributes to the Zn(2+) binding site. Gln-277 lines the 4-imidazolone-5-propanoate pocket. Fe(3+) is bound at residue Asp-349. Asp-349 provides a ligand contact to Zn(2+). Positions 351 and 353 each coordinate N-formimidoyl-L-glutamate. Position 354 (Ser-354) interacts with 4-imidazolone-5-propanoate.

This sequence belongs to the metallo-dependent hydrolases superfamily. HutI family. The cofactor is Zn(2+). It depends on Fe(3+) as a cofactor.

It is found in the cytoplasm. It catalyses the reaction 4-imidazolone-5-propanoate + H2O = N-formimidoyl-L-glutamate. It functions in the pathway amino-acid degradation; L-histidine degradation into L-glutamate; N-formimidoyl-L-glutamate from L-histidine: step 3/3. Its function is as follows. Catalyzes the hydrolytic cleavage of the carbon-nitrogen bond in imidazolone-5-propanoate to yield N-formimidoyl-L-glutamate. It is the third step in the universal histidine degradation pathway. This chain is Imidazolonepropionase, found in Verminephrobacter eiseniae (strain EF01-2).